Here is a 271-residue protein sequence, read N- to C-terminus: Orotidine 5'-phosphate decarboxylase (271 aa).

Lys-97 functions as the Proton donor in the catalytic mechanism.

Belongs to the OMP decarboxylase family. Type 2 subfamily.

The enzyme catalyses orotidine 5'-phosphate + H(+) = UMP + CO2. It participates in pyrimidine metabolism; UMP biosynthesis via de novo pathway; UMP from orotate: step 2/2. This chain is Orotidine 5'-phosphate decarboxylase, found in Leptospira borgpetersenii serovar Hardjo-bovis (strain L550).